Reading from the N-terminus, the 220-residue chain is Flavin-dependent thymidylate synthase (220 aa).

The ThyX domain maps to 1 to 208 (MKIDILDKGF…PWTFEAFLKY (208 aa)). Residues Thr55, 78–80 (RHR), and Glu86 contribute to the FAD site. DUMP-binding positions include 75–78 (QWFR), 86–90 (ELSGR), and Arg147. The ThyX motif signature appears at 78–88 (RHRIASYNELS). Residues 163–165 (NAR) and Asn169 contribute to the FAD site. Position 174 (Arg174) interacts with dUMP. The active-site Involved in ionization of N3 of dUMP, leading to its activation is the Arg174.

This sequence belongs to the thymidylate synthase ThyX family. As to quaternary structure, homotetramer. FAD is required as a cofactor.

The catalysed reaction is dUMP + (6R)-5,10-methylene-5,6,7,8-tetrahydrofolate + NADPH + H(+) = dTMP + (6S)-5,6,7,8-tetrahydrofolate + NADP(+). It functions in the pathway pyrimidine metabolism; dTTP biosynthesis. Its function is as follows. Catalyzes the reductive methylation of 2'-deoxyuridine-5'-monophosphate (dUMP) to 2'-deoxythymidine-5'-monophosphate (dTMP) while utilizing 5,10-methylenetetrahydrofolate (mTHF) as the methyl donor, and NADPH and FADH(2) as the reductant. The sequence is that of Flavin-dependent thymidylate synthase from Thermotoga sp. (strain RQ2).